The sequence spans 223 residues: Shematrin-like protein 2 (223 aa).

Residues 1 to 19 form the signal peptide; that stretch reads MRILANLILLGVLFGVCLC.

As to expression, prismatic layer of shell (at protein level).

Its subcellular location is the secreted. The polypeptide is Shematrin-like protein 2 (Margaritifera margaritifera (Freshwater pearl mussel)).